Reading from the N-terminus, the 501-residue chain is Histone deacetylase 19 (501 aa).

Positions arginine 17 to glycine 329 are histone deacetylase. The active-site Proton donor/acceptor is the histidine 149. Zn(2+) is bound by residues aspartate 184, histidine 186, and aspartate 272. Residues histidine 383 to threonine 501 form a disordered region. Residues glutamate 397 to aspartate 407 show a composition bias toward acidic residues. The residue at position 416 (serine 416) is a Phosphoserine. 2 stretches are compositionally biased toward basic and acidic residues: residues aspartate 422–glutamate 457 and alanine 479–threonine 488.

This sequence belongs to the histone deacetylase family. HD type 1 subfamily. Interacts with SIN3, SAP18 and TPR1. Interacts with CDKE-1, MED14 and LUG. Interacts with TPL. Interacts with AHL22. Zn(2+) is required as a cofactor. Highly expressed in leaves, stems, flowers and young siliques.

It localises to the nucleus. It carries out the reaction N(6)-acetyl-L-lysyl-[histone] + H2O = L-lysyl-[histone] + acetate. In terms of biological role, responsible for the deacetylation of lysine residues on the N-terminal part of the core histones (H2A, H2B, H3 and H4). Histone deacetylation gives a tag for epigenetic repression and plays an important role in transcriptional regulation, cell cycle progression and developmental events. Histone deacetylases act via the formation of large multiprotein complexes. HDA19 is involved in jasmonic acid and ethylene signaling of pathogen response. Part of a repressor complex including APETALA2 (AP2) and TOPLESS (TPL) that control the expression domains of numerous floral organ identity genes. Involved in negative regulation of salinity stress response. Represses the expression of stress tolerance-related genes, genes coding for late embryogenesis abundant (LEA) proteins that prevent protein aggregation, and positive regulators of abscisic acid (ABA) signaling, such as ABI5 and NAC019. The polypeptide is Histone deacetylase 19 (Arabidopsis thaliana (Mouse-ear cress)).